Consider the following 231-residue polypeptide: Ion-translocating oxidoreductase complex subunit E (231 aa).

6 helical membrane passes run 18 to 38 (ALVQLLGLCPLLAVTSTATNA), 39 to 59 (LGLGLATTLVLTLTNLTISTL), 63 to 83 (TPAEIRIPIYVMIIASVVSAV), 86 to 106 (LINAYAFGLYQSLGIFIPLIV), 125 to 145 (ALSALDGFSIGMGATCAMFVL), and 182 to 202 (PFLLAMLPPGAFIGLGLMLAG).

This sequence belongs to the NqrDE/RnfAE family. In terms of assembly, the complex is composed of six subunits: RsxA, RsxB, RsxC, RsxD, RsxE and RsxG.

It is found in the cell inner membrane. Its function is as follows. Part of a membrane-bound complex that couples electron transfer with translocation of ions across the membrane. Required to maintain the reduced state of SoxR. The sequence is that of Ion-translocating oxidoreductase complex subunit E from Escherichia coli O127:H6 (strain E2348/69 / EPEC).